Reading from the N-terminus, the 243-residue chain is MIEIIISTIFILYILLTKYKYETLKVIRTLMKNYKEIPLQNITLSENNEVTVEDKRIKIVTITIHGNKHMVKYKFNNKLFTALLPCTESEYQFHITTKNGIDVTENVIKFMGPNYDFYGVKIKVNEIGYDSLMFHRPGKEPTILKSDDYLPNNLSDYQWDFSLVGLNQNISPPPVGEETASNTVEENTMENILKETKNLSQNILIQKKTSISGYKTLDVKRKFVKRKFVKRINLNYSFLILLN.

The Bipartite nuclear localization signal motif lies at 207–224 (KKTSISGYKTLDVKRKFV).

This is an uncharacterized protein from Acheta domesticus (House cricket).